Consider the following 252-residue polypeptide: Chitooligosaccharide deacetylase (252 aa).

His-61 and His-125 together coordinate Mg(2+).

This sequence belongs to the YdjC deacetylase family. ChbG subfamily. Homodimer. The cofactor is Mg(2+).

Its subcellular location is the cytoplasm. The enzyme catalyses N,N'-diacetylchitobiose + H2O = N-acetyl-beta-D-glucosaminyl-(1-&gt;4)-D-glucosamine + acetate. It catalyses the reaction diacetylchitobiose-6'-phosphate + H2O = N'-monoacetylchitobiose-6'-phosphate + acetate. Its pathway is glycan degradation; chitin degradation. Functionally, involved in the degradation of chitin. ChbG is essential for growth on the acetylated chitooligosaccharides chitobiose and chitotriose but is dispensable for growth on cellobiose and chitosan dimer, the deacetylated form of chitobiose. Deacetylation of chitobiose-6-P and chitotriose-6-P is necessary for both the activation of the chb promoter by the regulatory protein ChbR and the hydrolysis of phosphorylated beta-glucosides by the phospho-beta-glucosidase ChbF. Catalyzes the removal of only one acetyl group from chitobiose-6-P to yield monoacetylchitobiose-6-P, the inducer of ChbR and the substrate of ChbF. This chain is Chitooligosaccharide deacetylase, found in Salmonella paratyphi A (strain ATCC 9150 / SARB42).